Reading from the N-terminus, the 314-residue chain is DNA-directed RNA polymerase subunit alpha (314 aa).

The alpha N-terminal domain (alpha-NTD) stretch occupies residues M1 to N227. The tract at residues K241 to N314 is alpha C-terminal domain (alpha-CTD).

This sequence belongs to the RNA polymerase alpha chain family. As to quaternary structure, in plastids the minimal PEP RNA polymerase catalytic core is composed of four subunits: alpha, beta, beta', and beta''. When a (nuclear-encoded) sigma factor is associated with the core the holoenzyme is formed, which can initiate transcription.

The protein localises to the plastid. Its subcellular location is the chloroplast. It carries out the reaction RNA(n) + a ribonucleoside 5'-triphosphate = RNA(n+1) + diphosphate. Its function is as follows. DNA-dependent RNA polymerase catalyzes the transcription of DNA into RNA using the four ribonucleoside triphosphates as substrates. The protein is DNA-directed RNA polymerase subunit alpha of Rhodomonas salina (Cryptomonas salina).